A 419-amino-acid chain; its full sequence is UDP-N-acetylglucosamine 1-carboxyvinyltransferase (419 aa).

A phosphoenolpyruvate-binding site is contributed by 22–23 (KN). Residue R95 coordinates UDP-N-acetyl-alpha-D-glucosamine. The Proton donor role is filled by C119. C119 bears the 2-(S-cysteinyl)pyruvic acid O-phosphothioketal mark. Residues 164–167 (KVSV), D308, and I330 each bind UDP-N-acetyl-alpha-D-glucosamine.

The protein belongs to the EPSP synthase family. MurA subfamily.

It localises to the cytoplasm. The catalysed reaction is phosphoenolpyruvate + UDP-N-acetyl-alpha-D-glucosamine = UDP-N-acetyl-3-O-(1-carboxyvinyl)-alpha-D-glucosamine + phosphate. It participates in cell wall biogenesis; peptidoglycan biosynthesis. Functionally, cell wall formation. Adds enolpyruvyl to UDP-N-acetylglucosamine. This Rickettsia conorii (strain ATCC VR-613 / Malish 7) protein is UDP-N-acetylglucosamine 1-carboxyvinyltransferase.